The primary structure comprises 106 residues: Transcription initiation factor IIA subunit 2 (106 aa).

Belongs to the TFIIA subunit 2 family. As to quaternary structure, TFIIA is a heterodimer of the large unprocessed subunit 1 and a small subunit gamma. It was originally believed to be a heterotrimer of an alpha, a beta and a gamma subunit.

The protein resides in the nucleus. In terms of biological role, TFIIA is a component of the transcription machinery of RNA polymerase II and plays an important role in transcriptional activation. TFIIA in a complex with TBP mediates transcriptional activity. This chain is Transcription initiation factor IIA subunit 2 (TFIIA-S), found in Arabidopsis thaliana (Mouse-ear cress).